Consider the following 450-residue polypeptide: Tol-Pal system protein TolB (450 aa).

The first 47 residues, 1–47 (MRKLWAPNWLSAKRHHANQAATRLIGRHALMAWLAAALALSAGAAQA), serve as a signal peptide directing secretion.

The protein belongs to the TolB family. As to quaternary structure, the Tol-Pal system is composed of five core proteins: the inner membrane proteins TolA, TolQ and TolR, the periplasmic protein TolB and the outer membrane protein Pal. They form a network linking the inner and outer membranes and the peptidoglycan layer.

It localises to the periplasm. Part of the Tol-Pal system, which plays a role in outer membrane invagination during cell division and is important for maintaining outer membrane integrity. This is Tol-Pal system protein TolB from Cupriavidus pinatubonensis (strain JMP 134 / LMG 1197) (Cupriavidus necator (strain JMP 134)).